Consider the following 578-residue polypeptide: Threonylcarbamoyladenosine tRNA methylthiotransferase (578 aa).

The MTTase N-terminal domain maps to 63–171; that stretch reads QKIWIRTWGC…VVEVVEETIK (109 aa). [4Fe-4S] cluster-binding residues include C72 and C108. S121 bears the Phosphoserine mark. Residues C137, C213, C217, and C220 each contribute to the [4Fe-4S] cluster site. A Radical SAM core domain is found at 199–430; it reads RKNPLIEIIS…RVFHSYNPYD (232 aa). Residues 430 to 492 form the TRAM domain; that stretch reads DHKIGERQQV…KHFLKGQPVS (63 aa). At T498 the chain carries Phosphothreonine. A helical transmembrane segment spans residues 553-570; that stretch reads CALKVATGLALLALLLHF.

The protein belongs to the methylthiotransferase family. CDKAL1 subfamily. [4Fe-4S] cluster serves as cofactor. As to expression, expressed in pancreas, liver and skeletal muscle, especially in white muscle fibers.

It is found in the endoplasmic reticulum membrane. It carries out the reaction N(6)-L-threonylcarbamoyladenosine(37) in tRNA + (sulfur carrier)-SH + AH2 + 2 S-adenosyl-L-methionine = 2-methylsulfanyl-N(6)-L-threonylcarbamoyladenosine(37) in tRNA + (sulfur carrier)-H + 5'-deoxyadenosine + L-methionine + A + S-adenosyl-L-homocysteine + 2 H(+). Functionally, catalyzes the methylthiolation of N6-threonylcarbamoyladenosine (t(6)A), leading to the formation of 2-methylthio-N6-threonylcarbamoyladenosine (ms(2)t(6)A) at position 37 in tRNAs that read codons beginning with adenine. This is Threonylcarbamoyladenosine tRNA methylthiotransferase (Cdkal1) from Mus musculus (Mouse).